A 614-amino-acid chain; its full sequence is Probable ATP-dependent RNA helicase DDX5 (614 aa).

Positions 1–15 (MSSYSSDRDRGRDRG) are enriched in basic and acidic residues. Residues 1–39 (MSSYSSDRDRGRDRGFGAPRFGGSRTGPLSGKKFGNPGE) are disordered. Phosphoserine is present on Ser-24. Lys-32 bears the N6-acetyllysine; alternate mark. A Glycyl lysine isopeptide (Lys-Gly) (interchain with G-Cter in SUMO2); alternate cross-link involves residue Lys-32. 2 positions are modified to N6-acetyllysine: Lys-33 and Lys-40. Lys-45 is covalently cross-linked (Glycyl lysine isopeptide (Lys-Gly) (interchain with G-Cter in SUMO2)). Lys-53 is covalently cross-linked (Glycyl lysine isopeptide (Lys-Gly) (interchain with G-Cter in SUMO2); alternate). Lys-53 participates in a covalent cross-link: Glycyl lysine isopeptide (Lys-Gly) (interchain with G-Cter in SUMO); alternate. Lys-53 is covalently cross-linked (Glycyl lysine isopeptide (Lys-Gly) (interchain with G-Cter in SUMO1); alternate). The Q motif signature appears at 94 to 122 (LNFYEANFPANVMDVIARQNFTEPTAIQA). Residues 114-116 (FTE), Gln-121, and 138-145 (AQTGSGKT) contribute to the ATP site. The 176-residue stretch at 125–300 (WPVALSGLDM…EDFLKDYIHI (176 aa)) folds into the Helicase ATP-binding domain. Lys-236 bears the N6-acetyllysine mark. The DEAD box signature appears at 248–251 (DEAD). Phosphotyrosine is present on Tyr-297. Positions 328 to 475 (KLIRLMEEIM…AINPKLLQLV (148 aa)) constitute a Helicase C-terminal domain. Glycyl lysine isopeptide (Lys-Gly) (interchain with G-Cter in SUMO2) cross-links involve residues Lys-340, Lys-343, Lys-388, Lys-391, Lys-411, Lys-437, Lys-451, and Lys-470. Residues 477–504 (DRGSGRSRGRGGMKDDRRDRYSAGKRGG) form a disordered region. The tract at residues 477-614 (DRGSGRSRGR…GYPMPTGYSQ (138 aa)) is transactivation domain. Position 480 is a phosphoserine (Ser-480). Positions 488–498 (GMKDDRRDRYS) are enriched in basic and acidic residues. Lys-523 participates in a covalent cross-link: Glycyl lysine isopeptide (Lys-Gly) (interchain with G-Cter in SUMO2).

Belongs to the DEAD box helicase family. DDX5/DBP2 subfamily. Identified in the spliceosome C complex. Component of a ribonucleoprotein complex containing mRNAs and RNA-binding proteins including DDX5, HNRNPH2 and SRSF1 as well as splicing regulator ARVCF. Interacts with RBM4; the interaction occurs in an RNA-independent manner. Interacts with AGO1 and AGO2. Interacts with ESR1, AR, EP300, CREBBP, POLR2A, TP53, RUNX2 and HDAC1. Self-associates. Interacts with DDX17. Interacts with BRDT. The large PER complex involved in the repression of transcriptional termination is composed of at least PER2, CDK9, DDX5, DHX9, NCBP1 and POLR2A (active). Interacts with DHX36; this interaction occurs in a RNA-dependent manner. Interacts with NUPR1. Interacts with ERCC6. Interacts with DDX3X in the cytoplasm; this interaction may be more efficient when both proteins are unphosphorylated. Sumoylated; sumoylation, promoted by PIAS1, promotes interaction with HDAC1 and transcriptional repression activity. Sumoylation also significantly increases stability, and reduces polyubiquitination. In terms of processing, polyubiquitinated, leading to proteasomal degradation. Post-translationally, weakly phosphorylated in the G1/S phase of the cell cycle and much more at G2/M, especially at Thr and Tyr residues.

It localises to the nucleus. Its subcellular location is the nucleolus. The protein resides in the cytoplasm. It catalyses the reaction ATP + H2O = ADP + phosphate + H(+). Functionally, involved in the alternative regulation of pre-mRNA splicing; its RNA helicase activity is necessary for increasing tau exon 10 inclusion and occurs in a RBM4-dependent manner. Binds to the tau pre-mRNA in the stem-loop region downstream of exon 10. The rate of ATP hydrolysis is highly stimulated by single-stranded RNA. Involved in transcriptional regulation; the function is independent of the RNA helicase activity. Transcriptional coactivator for androgen receptor AR but probably not ESR1. Synergizes with DDX17 and SRA1 RNA to activate MYOD1 transcriptional activity and involved in skeletal muscle differentiation. Transcriptional coactivator for p53/TP53 and involved in p53/TP53 transcriptional response to DNA damage and p53/TP53-dependent apoptosis. Transcriptional coactivator for RUNX2 and involved in regulation of osteoblast differentiation. Acts as a transcriptional repressor in a promoter-specific manner; the function probably involves association with histone deacetylases, such as HDAC1. As component of a large PER complex is involved in the inhibition of 3' transcriptional termination of circadian target genes such as PER1 and NR1D1 and the control of the circadian rhythms. The polypeptide is Probable ATP-dependent RNA helicase DDX5 (Ddx5) (Mus musculus (Mouse)).